The primary structure comprises 140 residues: MSTIRCDIVSAEQEIFHGEATFVVATGELGELGIAPKHAPLITRLKPGKVVITTVNGEQLDFAISGGILEVQPQVVTILADSAIRADTIDEVAVRKAKEEAERILANRGETIDVAKAQQQLVEAVVQMQALERLRRTVKH.

The protein belongs to the ATPase epsilon chain family. In terms of assembly, F-type ATPases have 2 components, CF(1) - the catalytic core - and CF(0) - the membrane proton channel. CF(1) has five subunits: alpha(3), beta(3), gamma(1), delta(1), epsilon(1). CF(0) has three main subunits: a, b and c.

The protein localises to the cell inner membrane. Functionally, produces ATP from ADP in the presence of a proton gradient across the membrane. This is ATP synthase epsilon chain from Xylella fastidiosa (strain Temecula1 / ATCC 700964).